We begin with the raw amino-acid sequence, 126 residues long: Large ribosomal subunit protein bL19 (126 aa).

This sequence belongs to the bacterial ribosomal protein bL19 family.

This protein is located at the 30S-50S ribosomal subunit interface and may play a role in the structure and function of the aminoacyl-tRNA binding site. The polypeptide is Large ribosomal subunit protein bL19 (Bordetella bronchiseptica (strain ATCC BAA-588 / NCTC 13252 / RB50) (Alcaligenes bronchisepticus)).